We begin with the raw amino-acid sequence, 302 residues long: Methionyl-tRNA formyltransferase (302 aa).

108 to 111 contacts (6S)-5,6,7,8-tetrahydrofolate; it reads SLLP. The span at 276–288 shows a compositional bias: basic and acidic residues; the sequence is REGKRPMEPEEFL. Residues 276 to 302 are disordered; the sequence is REGKRPMEPEEFLRGFPLPEGSRAHTA.

Belongs to the Fmt family.

It carries out the reaction L-methionyl-tRNA(fMet) + (6R)-10-formyltetrahydrofolate = N-formyl-L-methionyl-tRNA(fMet) + (6S)-5,6,7,8-tetrahydrofolate + H(+). In terms of biological role, attaches a formyl group to the free amino group of methionyl-tRNA(fMet). The formyl group appears to play a dual role in the initiator identity of N-formylmethionyl-tRNA by promoting its recognition by IF2 and preventing the misappropriation of this tRNA by the elongation apparatus. The protein is Methionyl-tRNA formyltransferase of Cereibacter sphaeroides (strain KD131 / KCTC 12085) (Rhodobacter sphaeroides).